A 431-amino-acid polypeptide reads, in one-letter code: CCA tRNA nucleotidyltransferase 1, mitochondrial (431 aa).

The N-terminal 31 residues, 1–31, are a transit peptide targeting the mitochondrion; that stretch reads MWAKLFLRPSFVNRVHLTWSCRALLTMQLKT. ATP contacts are provided by glycine 61 and arginine 64. The CTP site is built by glycine 61 and arginine 64. Aspartate 74 and aspartate 76 together coordinate Mg(2+). The ATP site is built by arginine 148, aspartate 191, arginine 194, arginine 197, and arginine 200. Residues arginine 148, aspartate 191, arginine 194, arginine 197, and arginine 200 each coordinate CTP.

It belongs to the tRNA nucleotidyltransferase/poly(A) polymerase family. As to quaternary structure, monomer, and homodimer. Requires Mg(2+) as cofactor. Expressed ubiquitously during early embryogenesis.

Its subcellular location is the mitochondrion. It localises to the cytoplasm. The protein resides in the nucleus. It carries out the reaction a tRNA precursor + 2 CTP + ATP = a tRNA with a 3' CCA end + 3 diphosphate. It catalyses the reaction a tRNA with a 3' CCA end + 2 CTP + ATP = a tRNA with a 3' CCACCA end + 3 diphosphate. In terms of biological role, nucleotidyltransferase that catalyzes the addition and repair of the essential 3'-terminal CCA sequence in tRNAs, which is necessary for the attachment of amino acids to the 3' terminus of tRNA molecules, using CTP and ATP as substrates. tRNA 3'-terminal CCA addition is required both for tRNA processing and repair. Promotes tRNA repair and recycling downstream of the ribosome-associated quality control (RQC) pathway by mediating addition of the tRNA 3'-terminal CCA following cleavage by ankzf1 and repair by elac1. Also involved in tRNA surveillance by mediating tandem CCA addition to generate a CCACCA at the 3' terminus of unstable tRNAs and tRNA-like transcripts. While stable tRNAs receive only 3'-terminal CCA, unstable tRNAs beginning with GG are marked with CCACCA and rapidly degraded. The structural flexibility of RNA controls the choice between CCA versus CCACCA addition: following the first CCA addition cycle, nucleotide-binding to the active site triggers a clockwise screw motion, producing torque on the RNA. This ejects stable RNAs, whereas unstable RNAs are refolded while bound to the enzyme and subjected to a second CCA catalytic cycle. This is CCA tRNA nucleotidyltransferase 1, mitochondrial from Danio rerio (Zebrafish).